The chain runs to 608 residues: Threonine--tRNA ligase (608 aa).

Positions 1–144 (MRILLIHSDY…SRTITAEEEE (144 aa)) are editing domain. Residues 195–489 (PHVKLMREKE…ELDEKAPMLP (295 aa)) form a catalytic region. The Zn(2+) site is built by cysteine 286, histidine 338, and histidine 459.

The protein belongs to the class-II aminoacyl-tRNA synthetase family. Homodimer. It depends on Zn(2+) as a cofactor.

Its subcellular location is the cytoplasm. It catalyses the reaction tRNA(Thr) + L-threonine + ATP = L-threonyl-tRNA(Thr) + AMP + diphosphate + H(+). Its function is as follows. Catalyzes the attachment of threonine to tRNA(Thr) in a two-step reaction: L-threonine is first activated by ATP to form Thr-AMP and then transferred to the acceptor end of tRNA(Thr). Also edits incorrectly charged L-seryl-tRNA(Thr). The protein is Threonine--tRNA ligase of Methanobrevibacter smithii (strain ATCC 35061 / DSM 861 / OCM 144 / PS).